Consider the following 928-residue polypeptide: BCAS3 microtubule associated cell migration factor (928 aa).

The residue at position 1 (M1) is an N-acetylmethionine. One copy of the WD repeat lies at 69–114; sequence DLNDTSRNLEFHEIHSTGNEPPLLIMIGYSDGMQVWSIPISGEAQE. A Glycyl lysine isopeptide (Lys-Gly) (interchain with G-Cter in SUMO1); alternate cross-link involves residue K215. A Glycyl lysine isopeptide (Lys-Gly) (interchain with G-Cter in SUMO2); alternate cross-link involves residue K215. Required for recruitment to preautophagosomal structure in response to mitophagy stretches follow at residues 254–312 and 437–560; these read RGGA…SRRS and YGGQ…IKAP. Phosphoserine occurs at positions 461, 480, and 488. Disordered stretches follow at residues 472–515 and 755–777; these read TSKQ…PGNP and TTVISSSSSVLQSHGPSDTPQPL. Composition is skewed to low complexity over residues 480 to 494, 505 to 514, and 755 to 771; these read SPVPGLSSSPSGSPL, NNFTNNNPGN, and TTVISSSSSVLQSHGPS. Phosphoserine is present on residues S838, S886, and S898. The segment at 868–928 is disordered; that stretch reads ESPSRDVVGS…PLSLFPTGFP (61 aa). Residues 887–901 are compositionally biased toward low complexity; the sequence is IETLSNSSGSTSGSI.

The protein belongs to the BCAS3 family. Interacts with histone H3, ESR1, KAT2B and PELP1; the interactions occur in a estrogen-dependent manner. Interacts with beta-tubulin and VIM. Interacts (via C-terminal) with PHAF1; the interaction is requrired for the association with the phagophore. As to expression, expressed in stomach, liver, lung, kidney, prostate, testis, thyroid gland, adrenal gland, brain, heart, skeletal muscle, colon, spleen, small intestine, placenta, blood leukocyte and mammary epithelial cells. Expressed in undifferentiated ES cells. Expressed in blood islands and nascent blood vessels derived from differentiated ES cells into embryoid bodies (BD). Expressed in endothelial cells. Not detected in brain. Expressed in brain tumors (at protein level). Expressed in brain. Highly expressed in breast cancers and in glioma cell lines.

The protein localises to the nucleus. It is found in the cytoplasm. It localises to the cytoskeleton. The protein resides in the preautophagosomal structure. In terms of biological role, plays a role in angiogenesis. Participates in the regulation of cell polarity and directional endothelial cell migration by mediating both the activation and recruitment of CDC42 and the reorganization of the actin cytoskeleton at the cell leading edge. Promotes filipodia formation. Functions synergistically with PELP1 as a transcriptional coactivator of estrogen receptor-responsive genes. Stimulates histone acetyltransferase activity. Binds to chromatin. Plays a regulatory role in autophagic activity. In complex with PHAF1, associates with the preautophagosomal structure during both non-selective and selective autophagy. Probably binds phosphatidylinositol 3-phosphate (PtdIns3P) which would mediate the recruitment preautophagosomal structures. The polypeptide is BCAS3 microtubule associated cell migration factor (Homo sapiens (Human)).